Here is a 57-residue protein sequence, read N- to C-terminus: Putative secreted protein MT0250 (57 aa).

Positions 1–32 (MNRIVAPAAASVVVGLLLGAAAIFGVTLMVQQ) are cleaved as a signal peptide. Positions 34–57 (KKPPLPGGDPSSSVLNRVEYGNRS) are disordered.

This is Putative secreted protein MT0250 from Mycobacterium tuberculosis (strain CDC 1551 / Oshkosh).